The sequence spans 350 residues: Dihydroorotate dehydrogenase (quinone) (350 aa).

Residues 65 to 69 (AGLDK) and threonine 89 each bind FMN. Position 69 (lysine 69) interacts with substrate. 114-118 (NRLGF) is a binding site for substrate. Positions 149 and 182 each coordinate FMN. Residue asparagine 182 coordinates substrate. Residue serine 185 is the Nucleophile of the active site. Residue asparagine 187 participates in substrate binding. Residues lysine 227 and threonine 255 each coordinate FMN. 256-257 (NT) contributes to the substrate binding site. FMN contacts are provided by residues glycine 278, glycine 307, and 328–329 (YT).

The protein belongs to the dihydroorotate dehydrogenase family. Type 2 subfamily. As to quaternary structure, monomer. FMN is required as a cofactor.

It is found in the cell membrane. It catalyses the reaction (S)-dihydroorotate + a quinone = orotate + a quinol. It participates in pyrimidine metabolism; UMP biosynthesis via de novo pathway; orotate from (S)-dihydroorotate (quinone route): step 1/1. Functionally, catalyzes the conversion of dihydroorotate to orotate with quinone as electron acceptor. The protein is Dihydroorotate dehydrogenase (quinone) of Polaromonas naphthalenivorans (strain CJ2).